The chain runs to 462 residues: tRNA modification GTPase MnmE (462 aa).

(6S)-5-formyl-5,6,7,8-tetrahydrofolate is bound by residues R23, E88, and R127. The TrmE-type G domain occupies 224–383 (GLATVIIGRP…LEKAIADLFF (160 aa)). N234 serves as a coordination point for K(+). GTP is bound by residues 234-239 (NVGKSS), 253-259 (TDIPGTT), and 278-281 (DTAG). Residue S238 coordinates Mg(2+). T253, I255, and T258 together coordinate K(+). T259 provides a ligand contact to Mg(2+). (6S)-5-formyl-5,6,7,8-tetrahydrofolate is bound at residue K462.

This sequence belongs to the TRAFAC class TrmE-Era-EngA-EngB-Septin-like GTPase superfamily. TrmE GTPase family. Homodimer. Heterotetramer of two MnmE and two MnmG subunits. K(+) is required as a cofactor.

The protein localises to the cytoplasm. In terms of biological role, exhibits a very high intrinsic GTPase hydrolysis rate. Involved in the addition of a carboxymethylaminomethyl (cmnm) group at the wobble position (U34) of certain tRNAs, forming tRNA-cmnm(5)s(2)U34. The protein is tRNA modification GTPase MnmE of Geobacillus thermodenitrificans (strain NG80-2).